The chain runs to 165 residues: Cyclic pyranopterin monophosphate synthase (165 aa).

Residues 76–78 (LCH) and 114–115 (ME) each bind substrate. The active site involves Asp129.

Belongs to the MoaC family. In terms of assembly, homohexamer; trimer of dimers.

The catalysed reaction is (8S)-3',8-cyclo-7,8-dihydroguanosine 5'-triphosphate = cyclic pyranopterin phosphate + diphosphate. Its pathway is cofactor biosynthesis; molybdopterin biosynthesis. Functionally, catalyzes the conversion of (8S)-3',8-cyclo-7,8-dihydroguanosine 5'-triphosphate to cyclic pyranopterin monophosphate (cPMP). This chain is Cyclic pyranopterin monophosphate synthase, found in Brucella abortus (strain 2308).